Reading from the N-terminus, the 409-residue chain is Transcriptional regulator GME11370 (409 aa).

The segment at residues 17–44 (CHACAASKLKCSKEKPSCARCLKRNKPC) is a DNA-binding region (zn(2)-C6 fungal-type). The interval 49-83 (TRRAGRHHGSRSKKVPTISPASAPEPQPFSTTPPD) is disordered. The segment covering 51–62 (RAGRHHGSRSKK) has biased composition (basic residues).

The protein resides in the nucleus. Its function is as follows. Transcriptional regulator; part of the gene cluster that mediates the biosynthesis of dibenzodioxocinones such as pestalotiollide B, a novel class of inhibitors against cholesterol ester transfer protein (CEPT). This is Transcriptional regulator GME11370 from Pestalotiopsis microspora.